The chain runs to 370 residues: Phosphate-binding protein PstS2 (370 aa).

The first 22 residues, 1–22 (MKFARSGAAVSLLAAGTLVLTA), serve as a signal peptide directing secretion. C23 carries N-palmitoyl cysteine lipidation. C23 is lipidated: S-diacylglycerol cysteine. Phosphate is bound by residues 54 to 56 (STA), S84, D102, and 191 to 193 (SGT).

The protein belongs to the PstS family. As to quaternary structure, the complex is composed of two ATP-binding proteins (PstB), two transmembrane proteins (PstC and PstA) and a solute-binding protein (PstS).

It localises to the cell membrane. Its subcellular location is the secreted. Its function is as follows. Functions in inorganic phosphate uptake, a phosphate-binding protein, although probably not the main uptake protein under phosphate starvation. Part of the ABC transporter complex PstSACB involved in phosphate import. This is Phosphate-binding protein PstS2 (pstS2) from Mycobacterium bovis (strain BCG / Pasteur 1173P2).